The sequence spans 128 residues: Fluoride-specific ion channel FluC (128 aa).

A run of 4 helical transmembrane segments spans residues 3–23 (LYAL…RWWF), 33–53 (TLPL…GAAI), 69–89 (FAIT…AETV), and 99–119 (WTFV…ILGI). Residues G76 and T79 each contribute to the Na(+) site.

It belongs to the fluoride channel Fluc/FEX (TC 1.A.43) family.

It localises to the cell inner membrane. It carries out the reaction fluoride(in) = fluoride(out). Its activity is regulated as follows. Na(+) is not transported, but it plays an essential structural role and its presence is essential for fluoride channel function. Its function is as follows. Fluoride-specific ion channel. Important for reducing fluoride concentration in the cell, thus reducing its toxicity. In Nitrosospira multiformis (strain ATCC 25196 / NCIMB 11849 / C 71), this protein is Fluoride-specific ion channel FluC.